Consider the following 296-residue polypeptide: Gamma-D-glutamyl-L-lysine dipeptidyl-peptidase (296 aa).

Residues tyrosine 90, 199–201, and 218–219 contribute to the substrate site; these read DCS and DA. Residues 170–295 enclose the NlpC/P60 domain; sequence KGTAEDIIQT…ELCAVRRCFS (126 aa). Cysteine 200 serves as the catalytic Nucleophile. Residue histidine 253 is the Proton acceptor of the active site. Residue histidine 265 is part of the active site.

This sequence belongs to the peptidase C40 family.

The enzyme catalyses The enzyme releases L-Ala-gamma-D-Glu dipeptides from cell wall peptides via cleavage of an L-Ala-gamma-D-Glu-|-L-Lys bond.. Its pathway is cell wall degradation; peptidoglycan degradation. Specifically hydrolyzes gamma-D-glutamyl-L-lysine bonds in murein peptides, releasing L-Ala-D-Glu. This chain is Gamma-D-glutamyl-L-lysine dipeptidyl-peptidase (ykfC), found in Bacillus subtilis (strain 168).